Here is a 354-residue protein sequence, read N- to C-terminus: Protein RecA (354 aa).

Position 78 to 85 (78 to 85) interacts with ATP; the sequence is GPESSGKT.

This sequence belongs to the RecA family.

It is found in the cytoplasm. In terms of biological role, can catalyze the hydrolysis of ATP in the presence of single-stranded DNA, the ATP-dependent uptake of single-stranded DNA by duplex DNA, and the ATP-dependent hybridization of homologous single-stranded DNAs. It interacts with LexA causing its activation and leading to its autocatalytic cleavage. This Zymomonas mobilis subsp. mobilis (strain ATCC 31821 / ZM4 / CP4) protein is Protein RecA.